We begin with the raw amino-acid sequence, 456 residues long: Asparagine--tRNA ligase (456 aa).

Belongs to the class-II aminoacyl-tRNA synthetase family. Homodimer.

It localises to the cytoplasm. The enzyme catalyses tRNA(Asn) + L-asparagine + ATP = L-asparaginyl-tRNA(Asn) + AMP + diphosphate + H(+). This chain is Asparagine--tRNA ligase, found in Mycoplasma genitalium (strain ATCC 33530 / DSM 19775 / NCTC 10195 / G37) (Mycoplasmoides genitalium).